The primary structure comprises 238 residues: Orotidine 5'-phosphate decarboxylase (238 aa).

Residues Asp-10, Lys-32, 59-68, Thr-122, Arg-184, Gln-193, Gly-213, and Arg-214 contribute to the substrate site; that span reads DLKLHDIPNT. The active-site Proton donor is Lys-61.

It belongs to the OMP decarboxylase family. Type 1 subfamily. In terms of assembly, homodimer.

It catalyses the reaction orotidine 5'-phosphate + H(+) = UMP + CO2. It functions in the pathway pyrimidine metabolism; UMP biosynthesis via de novo pathway; UMP from orotate: step 2/2. Functionally, catalyzes the decarboxylation of orotidine 5'-monophosphate (OMP) to uridine 5'-monophosphate (UMP). The polypeptide is Orotidine 5'-phosphate decarboxylase (Bacillus cereus (strain ATCC 10987 / NRS 248)).